The following is a 561-amino-acid chain: Nephronectin (561 aa).

Positions 1-19 are cleaved as a signal peptide; the sequence is MAVLLAAVLASSLYLQVAA. Positions 52 to 87 constitute an EGF-like 1 domain; it reads SWGQCQPVCQPQCKHGECVGPNKCKCHPGFAGKTCN. Cystine bridges form between C56-C69, C60-C75, C77-C86, C93-C104, C100-C113, and C115-C127. Residues 89–128 form the EGF-like 2; calcium-binding domain; that stretch reads DLNECGLKPRPCKHRCMNTFGSYKCYCLNGYMLLPDGSCS. The EGF-like 3 domain maps to 132–168; that stretch reads SCSMANCQYGCDVVKGQVRCQCPSPGLQLAPDGRTCV. Residues 169–213 form the EGF-like 4; calcium-binding domain; the sequence is DIDECATGRVSCPRFRQCVNTFGSYICKCHTGFDLMYIGGKYQCH. Cystine bridges form between C173/C186, C180/C195, C197/C212, C218/C231, C225/C240, and C242/C253. In terms of domain architecture, EGF-like 5; calcium-binding spans 214-254; the sequence is DIDECSLGQHQCSSYARCYNIHGSYKCQCRDGYEGDGLNCV. Residues 266–370 are disordered; that stretch reads PIHMPERNGT…TSTTTRVITV (105 aa). The segment covering 307–316 has biased composition (low complexity); that stretch reads TNRPTSKPTT. Residues 317-348 are compositionally biased toward pro residues; it reads RPTPNPTPQPTPPPPPPLPTEPRTTPLPPTPE. Low complexity predominate over residues 352-366; the sequence is TRPTTIAPATSTTTR. An Integrin interaction motif is present at residues 382-384; the sequence is RGD. An MAM domain is found at 420–561; the sequence is HSCNFDHGLC…DDVSLKRGRC (142 aa).

Belongs to the nephronectin family. In terms of assembly, homodimer and homotrimer. In terms of tissue distribution, expressed in kidney (at protein level).

The protein localises to the secreted. Its subcellular location is the extracellular space. It localises to the extracellular matrix. Functionally, functional ligand of integrin alpha-8/beta-1 in kidney development. Regulates the expression of GDNF with integrin alpha-8/beta-1 which is essential for kidney development. May also play a role in the development and function of various tissues, regulating cell adhesion, spreading and survival through the binding of several integrins. The protein is Nephronectin (Npnt) of Mus musculus (Mouse).